We begin with the raw amino-acid sequence, 610 residues long: Dihydroxy-acid dehydratase (610 aa).

Asp81 serves as a coordination point for Mg(2+). Cys122 serves as a coordination point for [2Fe-2S] cluster. Positions 123 and 124 each coordinate Mg(2+). Position 124 is an N6-carboxylysine (Lys124). Residue Cys193 participates in [2Fe-2S] cluster binding. Glu489 contacts Mg(2+). Ser515 (proton acceptor) is an active-site residue.

It belongs to the IlvD/Edd family. Homodimer. It depends on [2Fe-2S] cluster as a cofactor. Mg(2+) serves as cofactor.

The enzyme catalyses (2R)-2,3-dihydroxy-3-methylbutanoate = 3-methyl-2-oxobutanoate + H2O. The catalysed reaction is (2R,3R)-2,3-dihydroxy-3-methylpentanoate = (S)-3-methyl-2-oxopentanoate + H2O. Its pathway is amino-acid biosynthesis; L-isoleucine biosynthesis; L-isoleucine from 2-oxobutanoate: step 3/4. It functions in the pathway amino-acid biosynthesis; L-valine biosynthesis; L-valine from pyruvate: step 3/4. In terms of biological role, functions in the biosynthesis of branched-chain amino acids. Catalyzes the dehydration of (2R,3R)-2,3-dihydroxy-3-methylpentanoate (2,3-dihydroxy-3-methylvalerate) into 2-oxo-3-methylpentanoate (2-oxo-3-methylvalerate) and of (2R)-2,3-dihydroxy-3-methylbutanoate (2,3-dihydroxyisovalerate) into 2-oxo-3-methylbutanoate (2-oxoisovalerate), the penultimate precursor to L-isoleucine and L-valine, respectively. This Xylella fastidiosa (strain M23) protein is Dihydroxy-acid dehydratase.